The chain runs to 314 residues: Chlorinase cctP2 (314 aa).

A compositionally biased stretch (basic and acidic residues) spans Met1–Asp14. A disordered region spans residues Met1–Glu24. 2 short sequence motifs (HXXHC) span residues His150 to Cys154 and His177 to Cys181.

This sequence belongs to the ustYa family.

It functions in the pathway mycotoxin biosynthesis. Its function is as follows. Chlorinase; part of the gene cluster that mediates the biosynthesis of the mycotoxin cyclochlorotine, a hepatotoxic and carcinogenic cyclic chlorinated pentapeptide. Within the pathway, cctP2 catalyzes the formation of isocyclochlorotine via dichlorination of the Pro from the isocyclotine skeleton. The NRPS cctN initially catalyzes the condensation of L-serine (Ser), Pro, L-2-aminobutyrate (2Abu), Ser, and beta-Phe in this order to produce isocyclotine. After the dichlorination of Pro2 catalyzed by cctP2 to produce isocyclochlorotine, the cctO-mediated transacylation of isocyclochlorotine can furnish cyclochlorotine. The subsequent hydroxylation of cyclochlorotine by cctR yields hydroxycyclochlorotine as the final product. CctP1 probably acts as a phenylalanine aminomutase and provides the uncommon building block beta-Phe. Furthermore, 2Abu can be synthesized from threonine by one of the threonine dehydratases and transaminases localized outside of the cluster. The functions of the remaining proteins encoded by the cluster, cctM and cctT, have not been identified yet. The protein is Chlorinase cctP2 of Talaromyces islandicus (Penicillium islandicum).